We begin with the raw amino-acid sequence, 417 residues long: Gamma-glutamyl phosphate reductase (417 aa).

Belongs to the gamma-glutamyl phosphate reductase family.

The protein resides in the cytoplasm. The enzyme catalyses L-glutamate 5-semialdehyde + phosphate + NADP(+) = L-glutamyl 5-phosphate + NADPH + H(+). It functions in the pathway amino-acid biosynthesis; L-proline biosynthesis; L-glutamate 5-semialdehyde from L-glutamate: step 2/2. In terms of biological role, catalyzes the NADPH-dependent reduction of L-glutamate 5-phosphate into L-glutamate 5-semialdehyde and phosphate. The product spontaneously undergoes cyclization to form 1-pyrroline-5-carboxylate. The chain is Gamma-glutamyl phosphate reductase from Escherichia coli O157:H7.